Consider the following 209-residue polypeptide: ATP phosphoribosyltransferase (209 aa).

Belongs to the ATP phosphoribosyltransferase family. Short subfamily. In terms of assembly, heteromultimer composed of HisG and HisZ subunits.

It localises to the cytoplasm. The enzyme catalyses 1-(5-phospho-beta-D-ribosyl)-ATP + diphosphate = 5-phospho-alpha-D-ribose 1-diphosphate + ATP. Its pathway is amino-acid biosynthesis; L-histidine biosynthesis; L-histidine from 5-phospho-alpha-D-ribose 1-diphosphate: step 1/9. In terms of biological role, catalyzes the condensation of ATP and 5-phosphoribose 1-diphosphate to form N'-(5'-phosphoribosyl)-ATP (PR-ATP). Has a crucial role in the pathway because the rate of histidine biosynthesis seems to be controlled primarily by regulation of HisG enzymatic activity. In Caldicellulosiruptor bescii (strain ATCC BAA-1888 / DSM 6725 / KCTC 15123 / Z-1320) (Anaerocellum thermophilum), this protein is ATP phosphoribosyltransferase.